The sequence spans 377 residues: 3-dehydroquinate synthase (377 aa).

NAD(+) is bound by residues 115–119 (GVIGD), 139–140 (TS), Lys-152, and Lys-162. Zn(2+) contacts are provided by Glu-195, His-257, and His-276.

This sequence belongs to the sugar phosphate cyclases superfamily. Dehydroquinate synthase family. Co(2+) serves as cofactor. The cofactor is Zn(2+). It depends on NAD(+) as a cofactor.

It is found in the cytoplasm. The catalysed reaction is 7-phospho-2-dehydro-3-deoxy-D-arabino-heptonate = 3-dehydroquinate + phosphate. Its pathway is metabolic intermediate biosynthesis; chorismate biosynthesis; chorismate from D-erythrose 4-phosphate and phosphoenolpyruvate: step 2/7. Functionally, catalyzes the conversion of 3-deoxy-D-arabino-heptulosonate 7-phosphate (DAHP) to dehydroquinate (DHQ). In Rhizobium etli (strain ATCC 51251 / DSM 11541 / JCM 21823 / NBRC 15573 / CFN 42), this protein is 3-dehydroquinate synthase.